Reading from the N-terminus, the 765-residue chain is Probable dipeptidyl peptidase 4 (765 aa).

The signal sequence occupies residues 1–14; sequence MKWSILLLVGCAAA. 8 N-linked (GlcNAc...) asparagine glycosylation sites follow: asparagine 35, asparagine 78, asparagine 101, asparagine 110, asparagine 169, asparagine 218, asparagine 465, and asparagine 490. The active-site Charge relay system is the serine 613. An N-linked (GlcNAc...) asparagine glycan is attached at asparagine 665. Active-site charge relay system residues include aspartate 690 and histidine 725.

Belongs to the peptidase S9B family.

It is found in the secreted. The catalysed reaction is Release of an N-terminal dipeptide, Xaa-Yaa-|-Zaa-, from a polypeptide, preferentially when Yaa is Pro, provided Zaa is neither Pro nor hydroxyproline.. Extracellular dipeptidyl-peptidase which removes N-terminal dipeptides sequentially from polypeptides having unsubstituted N-termini provided that the penultimate residue is proline. Contributes to pathogenicity. In Aspergillus fumigatus (strain ATCC MYA-4609 / CBS 101355 / FGSC A1100 / Af293) (Neosartorya fumigata), this protein is Probable dipeptidyl peptidase 4 (dpp4).